A 500-amino-acid chain; its full sequence is Probable cytosol aminopeptidase (500 aa).

The Mn(2+) site is built by Lys264 and Asp269. Lys276 is an active-site residue. Asp287, Asp346, and Glu348 together coordinate Mn(2+). Residue Arg350 is part of the active site.

It belongs to the peptidase M17 family. Requires Mn(2+) as cofactor.

It is found in the cytoplasm. It catalyses the reaction Release of an N-terminal amino acid, Xaa-|-Yaa-, in which Xaa is preferably Leu, but may be other amino acids including Pro although not Arg or Lys, and Yaa may be Pro. Amino acid amides and methyl esters are also readily hydrolyzed, but rates on arylamides are exceedingly low.. The catalysed reaction is Release of an N-terminal amino acid, preferentially leucine, but not glutamic or aspartic acids.. Presumably involved in the processing and regular turnover of intracellular proteins. Catalyzes the removal of unsubstituted N-terminal amino acids from various peptides. This chain is Probable cytosol aminopeptidase, found in Chlamydia felis (strain Fe/C-56) (Chlamydophila felis).